Reading from the N-terminus, the 1893-residue chain is Serine-aspartate repeat-containing protein I (1893 aa).

An N-terminal signal peptide occupies residues 1–54 (MNFKGVKLLKNSKKRLDFLPNTLNKYSIRKFTVGTASILVGATLFLGVSNEAEA). Residues 53–333 (EAAEKIDSPT…AHGINNKNKQ (281 aa)) form a disordered region. A compositionally biased stretch (basic and acidic residues) spans 54–222 (AAEKIDSPTK…AEEPATKEEA (169 aa)). 21 repeat units span residues 72 to 83 (AATKEEAATTEE), 84 to 95 (PATKEEAATTEE), 96 to 107 (PATKEEAAIAEE), 108 to 119 (PATKEEAATTEE), 120 to 131 (PATKEEAAIAEE), 132 to 143 (PATKEEAATTEE), 144 to 155 (PATKEEAATTEE), 156 to 167 (PATKEEAAIAEE), 168 to 179 (PATKEEAATTEE), 180 to 191 (PATKEEAAIAEE), 192 to 203 (PATKEEAVTSEE), 204 to 215 (AATKEKAAIAEE), 216 to 227 (PATKEEAAIAEE), 228 to 239 (PETKEEAATTEE), 240 to 251 (PATKEEAAIAEE), 252 to 263 (AATKEKAVTSEE), 264 to 275 (AATKEKAAIAEE), 276 to 287 (AATKEKAAIAEE), 288 to 299 (PETKEEAATTEE), 300 to 311 (PETKEEAAIAEE), and 312 to 323 (PATKEKAVTSEE). A 21 X 12 AA tandem repeat of [AP]-[AE]-T-K-E-[EK]-A-[AV]-[IT]-[AST]-E-E region spans residues 72–323 (AATKEEAATT…TKEKAVTSEE (252 aa)). A compositionally biased stretch (basic and acidic residues) spans 240–284 (PATKEEAAIAEEAATKEKAVTSEEAATKEKAAIAEEAATKEKAAI). Residues 286–302 (EEPETKEEAATTEEPET) show a composition bias toward acidic residues. The span at 312–325 (PATKEKAVTSEEAH) shows a compositional bias: basic and acidic residues. The segment at 324-755 (AHGINNKNKQ…GSSTAQGDNP (432 aa)) is ligand binding A region. CNA-B domains are found at residues 756–874 (TYNL…YETP) and 875–984 (KYSL…YFDE). The disordered stretch occupies residues 941-1867 (KPEGLTQTTT…GNNTQNNGTL (927 aa)). The segment covering 955-975 (DENKDADGEEVHVTITDHDDF) has biased composition (basic and acidic residues). The segment covering 981–1836 (YFDEDSDADA…DSDADADADS (856 aa)) has biased composition (acidic residues). The segment covering 1837-1851 (DADKYHNDTADKSND) has biased composition (basic and acidic residues). The short motif at 1854 to 1858 (LPDTG) is the LPXTG sorting signal element. Pentaglycyl murein peptidoglycan amidated threonine is present on Thr1857. A propeptide spans 1858 to 1893 (GNNTQNNGTLFGSLFAALGGLFLVGSRRKNKNNEEK) (removed by sortase).

It belongs to the serine-aspartate repeat-containing protein (SDr) family.

Its subcellular location is the secreted. The protein resides in the cell wall. Functionally, responsible for collagen binding by S.saprophyticus. The polypeptide is Serine-aspartate repeat-containing protein I (sdrI) (Staphylococcus saprophyticus).